Here is a 258-residue protein sequence, read N- to C-terminus: MTAMPRIAFLASPAEPAVAARARLVQRYGDHALHDADIVCALGGDGFMLQTLHRHGAADKPVFGMKLGSVGFLMNQYRDDEDDLLARLQRAEPAHLRPLEMLVQTESGTSAGSLAYNEVSLLRQTRQAAHLSVDLNGQTRIAELIGDGVMVATPAGSTAYNYSAHGPILPLGSHTLALTPIAPYRPRRWRGAILKADTEVRFRVLDPYKRPVSVTADSHEIRDVVEVTIRESTERRVTLLFDPEHNLEERIFSEQFAV.

The active-site Proton acceptor is the D45. NAD(+)-binding positions include 45 to 46, 117 to 118, D147, A155, 158 to 163, and A182; these read DG, NE, and TAYNYS.

This sequence belongs to the NAD kinase family. A divalent metal cation is required as a cofactor.

The protein localises to the cytoplasm. The enzyme catalyses NAD(+) + ATP = ADP + NADP(+) + H(+). Functionally, involved in the regulation of the intracellular balance of NAD and NADP, and is a key enzyme in the biosynthesis of NADP. Catalyzes specifically the phosphorylation on 2'-hydroxyl of the adenosine moiety of NAD to yield NADP. The protein is NAD kinase of Xanthomonas campestris pv. campestris (strain 8004).